A 562-amino-acid polypeptide reads, in one-letter code: Exonuclease subunit 2 (562 aa).

Residue 36–43 (GKNGGGKS) coordinates ATP.

This sequence to phage T5 protein D13 and to yeast RAD52. In terms of assembly, consists of two subunits: Gp47 and Gp46.

Exonuclease involved in phage DNA recombination, replication, and repair. The polypeptide is Exonuclease subunit 2 (46) (Escherichia phage RB69 (Bacteriophage RB69)).